The sequence spans 527 residues: Amine oxidase [flavin-containing] A (527 aa).

Methionine 1 is modified (N-acetylmethionine). Residues 1 to 497 lie on the Cytoplasmic side of the membrane; that stretch reads MERQEKANNA…RTFWERNLPS (497 aa). The residue at position 383 (serine 383) is a Phosphoserine. Cysteine 406 is modified (S-8alpha-FAD cysteine). A helical; Anchor for type IV membrane protein membrane pass occupies residues 498-518; the sequence is VTGLLKIIGFSTSVTALWLAV. The Mitochondrial intermembrane segment spans residues 519–527; the sequence is YKFRLLTRS. The segment at 520–522 is interaction with membrane phospholipid headgroups; it reads KFR.

The protein belongs to the flavin monoamine oxidase family. Monomer, homo- or heterodimer (containing two subunits of similar size). Each subunit contains a covalently bound flavin. Enzymatically active as monomer. FAD is required as a cofactor.

It localises to the mitochondrion outer membrane. The enzyme catalyses a secondary aliphatic amine + O2 + H2O = a primary amine + an aldehyde + H2O2. It carries out the reaction a primary methyl amine + O2 + H2O = an aldehyde + H2O2 + NH4(+). The catalysed reaction is (R)-adrenaline + O2 + H2O = (R)-3,4-dihydroxymandelaldehyde + methylamine + H2O2. It catalyses the reaction dopamine + O2 + H2O = 3,4-dihydroxyphenylacetaldehyde + H2O2 + NH4(+). The enzyme catalyses tyramine + O2 + H2O = (4-hydroxyphenyl)acetaldehyde + H2O2 + NH4(+). It carries out the reaction (R)-noradrenaline + O2 + H2O = (R)-3,4-dihydroxymandelaldehyde + H2O2 + NH4(+). The catalysed reaction is serotonin + O2 + H2O = (5-hydroxyindol-3-yl)acetaldehyde + H2O2 + NH4(+). It catalyses the reaction kynuramine + O2 + H2O = 3-(2-aminophenyl)-3-oxopropanal + H2O2 + NH4(+). The enzyme catalyses tryptamine + O2 + H2O = indole-3-acetaldehyde + H2O2 + NH4(+). It carries out the reaction 2-phenylethylamine + O2 + H2O = 2-phenylacetaldehyde + H2O2 + NH4(+). Its function is as follows. Catalyzes the oxidative deamination of primary and some secondary amine such as neurotransmitters, with concomitant reduction of oxygen to hydrogen peroxide and has important functions in the metabolism of neuroactive and vasoactive amines in the central nervous system and peripheral tissues. Preferentially oxidizes serotonin. Also catalyzes the oxidative deamination of kynuramine to 3-(2-aminophenyl)-3-oxopropanal that can spontaneously condense to 4-hydroxyquinoline. This is Amine oxidase [flavin-containing] A from Sus scrofa (Pig).